Consider the following 81-residue polypeptide: Putative truncated GMC-type inactive oxidoreductase R833 (81 aa).

This sequence belongs to the GMC oxidoreductase family.

The chain is Putative truncated GMC-type inactive oxidoreductase R833 from Acanthamoeba polyphaga mimivirus (APMV).